We begin with the raw amino-acid sequence, 207 residues long: Ribonuclease HII (207 aa).

One can recognise an RNase H type-2 domain in the interval Asp-12–Gly-201. Positions 18, 19, and 110 each coordinate a divalent metal cation.

It belongs to the RNase HII family. Requires Mn(2+) as cofactor. The cofactor is Mg(2+).

Its subcellular location is the cytoplasm. The catalysed reaction is Endonucleolytic cleavage to 5'-phosphomonoester.. Its function is as follows. Endonuclease that specifically degrades the RNA of RNA-DNA hybrids. This chain is Ribonuclease HII, found in Pseudomonas putida (strain ATCC 47054 / DSM 6125 / CFBP 8728 / NCIMB 11950 / KT2440).